The following is a 455-amino-acid chain: ATP-dependent protease ATPase subunit HslU (455 aa).

ATP contacts are provided by residues valine 23, 65 to 70 (GVGKTE), aspartate 266, glutamate 333, and arginine 405.

It belongs to the ClpX chaperone family. HslU subfamily. As to quaternary structure, a double ring-shaped homohexamer of HslV is capped on each side by a ring-shaped HslU homohexamer. The assembly of the HslU/HslV complex is dependent on binding of ATP.

It is found in the cytoplasm. Functionally, ATPase subunit of a proteasome-like degradation complex; this subunit has chaperone activity. The binding of ATP and its subsequent hydrolysis by HslU are essential for unfolding of protein substrates subsequently hydrolyzed by HslV. HslU recognizes the N-terminal part of its protein substrates and unfolds these before they are guided to HslV for hydrolysis. The chain is ATP-dependent protease ATPase subunit HslU from Xanthomonas campestris pv. campestris (strain 8004).